A 109-amino-acid polypeptide reads, in one-letter code: ATP-dependent Clp protease adapter protein ClpS (109 aa).

The disordered stretch occupies residues 1–21; the sequence is MAERKQGGQNNGAGSSVITEV.

It belongs to the ClpS family. As to quaternary structure, binds to the N-terminal domain of the chaperone ClpA.

Involved in the modulation of the specificity of the ClpAP-mediated ATP-dependent protein degradation. The protein is ATP-dependent Clp protease adapter protein ClpS of Caulobacter sp. (strain K31).